The chain runs to 700 residues: Putative ankyrin repeat protein FPV018 (700 aa).

11 ANK repeats span residues 29–59, 63–92, 126–155, 204–233, 236–265, 270–299, 301–332, 395–424, 428–457, 461–490, and 494–523; these read DRLLSLHNILKENNVDRLRELIESDKDVINM, NRLLPLHIAIEHSDIEIVEMLLDNNAVING, RIRRLLTVNNTEKYTKIVKLLIKHGADLKM, MRRITIKCAIRAVNIELVKHFISNNLLADT, ALEDYFLEAVKTNSPKMVKLFLDSGIDINS, NSHTALYHAVEQENVTLVMLLLNHGADPDI, DIYSMLKYAIMSSKHGVKLFNILVKNGARIRC, CNMYPIHAAVSINTSRLTRLLINKGADVNV, YGKTPIHLACMYSKIGNIKVLIKNGANVNE, YGITPLMICSREGKVSNMEYLLANGADVNQ, and DKNTALTYAIRNKSKECTRVLLEHGADMCF.

This is Putative ankyrin repeat protein FPV018 from Fowlpox virus (strain NVSL) (FPV).